The chain runs to 512 residues: Maturase K (512 aa).

The protein belongs to the intron maturase 2 family. MatK subfamily.

The protein resides in the plastid. The protein localises to the chloroplast. In terms of biological role, usually encoded in the trnK tRNA gene intron. Probably assists in splicing its own and other chloroplast group II introns. The chain is Maturase K from Filarum manserichense.